The chain runs to 78 residues: Large ribosomal subunit protein bL28 (78 aa).

This sequence belongs to the bacterial ribosomal protein bL28 family.

This is Large ribosomal subunit protein bL28 from Colwellia psychrerythraea (strain 34H / ATCC BAA-681) (Vibrio psychroerythus).